Consider the following 182-residue polypeptide: Late embryogenesis abundant protein 3 (182 aa).

Positions M1–T51 are disordered. The Nuclear localization signal (NLS) signature appears at S7–P11. Over residues R10 to D21 the composition is skewed to basic and acidic residues. SMP domains follow at residues V58 to Q115 and V123 to Q181. Positions E145–L182 are disordered.

This sequence belongs to the LEA type SMP family.

Its subcellular location is the cytoplasm. The protein resides in the nucleus. LEA proteins are late embryonic proteins abundant in higher plant seed embryos. The function of those proteins is not known. The chain is Late embryogenesis abundant protein 3 from Arabidopsis thaliana (Mouse-ear cress).